The sequence spans 224 residues: Probable molybdenum cofactor guanylyltransferase (224 aa).

Residues 20 to 22, Lys-33, Asp-88, and Asp-117 contribute to the GTP site; that span reads LAG. Residue Asp-117 participates in Mg(2+) binding.

This sequence belongs to the MobA family. It depends on Mg(2+) as a cofactor.

The protein localises to the cytoplasm. It carries out the reaction Mo-molybdopterin + GTP + H(+) = Mo-molybdopterin guanine dinucleotide + diphosphate. Its function is as follows. Transfers a GMP moiety from GTP to Mo-molybdopterin (Mo-MPT) cofactor (Moco or molybdenum cofactor) to form Mo-molybdopterin guanine dinucleotide (Mo-MGD) cofactor. This chain is Probable molybdenum cofactor guanylyltransferase, found in Methanosarcina mazei (strain ATCC BAA-159 / DSM 3647 / Goe1 / Go1 / JCM 11833 / OCM 88) (Methanosarcina frisia).